The sequence spans 241 residues: Methylthioribulose-1-phosphate dehydratase (241 aa).

Positions 1–11 (MSSLCDTSNGE) are enriched in polar residues. The segment at 1-20 (MSSLCDTSNGESHADPCQDK) is disordered. Cys-96 provides a ligand contact to substrate. Residues His-114 and His-116 each contribute to the Zn(2+) site. Catalysis depends on Glu-138, which acts as the Proton donor/acceptor. His-194 contributes to the Zn(2+) binding site.

It belongs to the aldolase class II family. MtnB subfamily. Zn(2+) serves as cofactor.

The protein localises to the cytoplasm. It carries out the reaction 5-(methylsulfanyl)-D-ribulose 1-phosphate = 5-methylsulfanyl-2,3-dioxopentyl phosphate + H2O. It functions in the pathway amino-acid biosynthesis; L-methionine biosynthesis via salvage pathway; L-methionine from S-methyl-5-thio-alpha-D-ribose 1-phosphate: step 2/6. Its function is as follows. Catalyzes the dehydration of methylthioribulose-1-phosphate (MTRu-1-P) into 2,3-diketo-5-methylthiopentyl-1-phosphate (DK-MTP-1-P). Functions in the methionine salvage pathway. May play a role in apoptosis. This chain is Methylthioribulose-1-phosphate dehydratase, found in Osmerus mordax (Rainbow smelt).